Reading from the N-terminus, the 736-residue chain is Sulfate transporter (736 aa).

A disordered region spans residues 1–28 (MSSESKEPHVLSPKDSFEGNDRYSPPSR). 2 positions are modified to phosphoserine: Ser12 and Ser16. A run of 2 helical transmembrane segments spans residues 114-134 (VMSGLIVGILLVPQSIAYSLL) and 139-159 (PIYGLYTSFFASLIYFLLGTS). N-linked (GlcNAc...) asparagine glycans are attached at residues Asn201 and Asn207. 6 helical membrane passes run 229–249 (FLAGIYQVAMGFFQVGFVSVY), 257–277 (GFVTGASFTILTSQAKYLLGL), 380–400 (LIPSVAVDAIAISIIGFAITV), 422–442 (AIGFCNIIPSFFHCFTTSAAL), 457–477 (LSGVMTALVLLLVLLVIAPLF), and 526–546 (LISTELGLLIGVCFSMFCVIL). An STAS domain is found at 570–721 (AYKNLQARPG…YSVYEAMAFA (152 aa)).

The protein belongs to the SLC26A/SulP transporter (TC 2.A.53) family. In terms of processing, N-glycosylated.

The protein resides in the cell membrane. Its subcellular location is the apical cell membrane. The enzyme catalyses oxalate(in) + sulfate(out) = oxalate(out) + sulfate(in). It carries out the reaction sulfate(out) + 2 chloride(in) = sulfate(in) + 2 chloride(out). It catalyses the reaction oxalate(out) + 2 chloride(in) = oxalate(in) + 2 chloride(out). The catalysed reaction is bromide(in) + chloride(out) = bromide(out) + chloride(in). The enzyme catalyses nitrate(in) + chloride(out) = nitrate(out) + chloride(in). It carries out the reaction iodide(in) + chloride(out) = iodide(out) + chloride(in). Its function is as follows. Sulfate transporter which mediates sulfate uptake into chondrocytes in order to maintain adequate sulfation of proteoglycans which is needed for cartilage development. Mediates electroneutral anion exchange of sulfate ions for oxalate ions, sulfate and oxalate ions for chloride and/or hydroxyl ions and chloride ions for bromide, iodide and nitrate ions. The coupling of sulfate transport to both hydroxyl and chloride ions likely serves to ensure transport at both acidic pH when most sulfate uptake is mediated by sulfate-hydroxide exchange and alkaline pH when most sulfate uptake is mediated by sulfate-chloride exchange. Essential for chondrocyte proliferation, differentiation and cell size expansion. The protein is Sulfate transporter (SLC26A2) of Equus caballus (Horse).